The sequence spans 116 residues: Large ribosomal subunit protein bL19 (116 aa).

The protein belongs to the bacterial ribosomal protein bL19 family.

Its function is as follows. This protein is located at the 30S-50S ribosomal subunit interface and may play a role in the structure and function of the aminoacyl-tRNA binding site. In Actinobacillus pleuropneumoniae serotype 5b (strain L20), this protein is Large ribosomal subunit protein bL19.